The primary structure comprises 560 residues: DNA ligase B (560 aa).

Lys124 acts as the N6-AMP-lysine intermediate in catalysis.

The protein belongs to the NAD-dependent DNA ligase family. LigB subfamily.

It catalyses the reaction NAD(+) + (deoxyribonucleotide)n-3'-hydroxyl + 5'-phospho-(deoxyribonucleotide)m = (deoxyribonucleotide)n+m + AMP + beta-nicotinamide D-nucleotide.. Its function is as follows. Catalyzes the formation of phosphodiester linkages between 5'-phosphoryl and 3'-hydroxyl groups in double-stranded DNA using NAD as a coenzyme and as the energy source for the reaction. The sequence is that of DNA ligase B from Escherichia coli (strain K12 / DH10B).